The primary structure comprises 400 residues: Nicotinate phosphoribosyltransferase (400 aa).

Residue His220 is modified to Phosphohistidine; by autocatalysis.

This sequence belongs to the NAPRTase family. Transiently phosphorylated on a His residue during the reaction cycle. Phosphorylation strongly increases the affinity for substrates and increases the rate of nicotinate D-ribonucleotide production. Dephosphorylation regenerates the low-affinity form of the enzyme, leading to product release.

It carries out the reaction nicotinate + 5-phospho-alpha-D-ribose 1-diphosphate + ATP + H2O = nicotinate beta-D-ribonucleotide + ADP + phosphate + diphosphate. It participates in cofactor biosynthesis; NAD(+) biosynthesis; nicotinate D-ribonucleotide from nicotinate: step 1/1. Functionally, catalyzes the synthesis of beta-nicotinate D-ribonucleotide from nicotinate and 5-phospho-D-ribose 1-phosphate at the expense of ATP. This chain is Nicotinate phosphoribosyltransferase, found in Escherichia coli O127:H6 (strain E2348/69 / EPEC).